The primary structure comprises 613 residues: Proteasome-associated ATPase (613 aa).

Residues Met-1–Glu-29 form a disordered region. The stretch at Ser-23–Gln-100 forms a coiled coil. Gly-300 to Leu-305 provides a ligand contact to ATP. Lys-595 participates in a covalent cross-link: Isoglutamyl lysine isopeptide (Lys-Gln) (interchain with Q-Cter in protein Pup). Residues Tyr-612–Leu-613 are docks into pockets in the proteasome alpha-ring.

This sequence belongs to the AAA ATPase family. Homohexamer. Assembles into a hexameric ring structure that caps the 20S proteasome core. Strongly interacts with the prokaryotic ubiquitin-like protein Pup through a hydrophobic interface; the interacting region of ARC lies in its N-terminal coiled-coil domain. There is one Pup binding site per ARC hexamer ring. Upon ATP-binding, the C-terminus of ARC interacts with the alpha-rings of the proteasome core, possibly by binding to the intersubunit pockets.

The protein operates within protein degradation; proteasomal Pup-dependent pathway. In terms of biological role, ATPase which is responsible for recognizing, binding, unfolding and translocation of pupylated proteins into the bacterial 20S proteasome core particle. May be essential for opening the gate of the 20S proteasome via an interaction with its C-terminus, thereby allowing substrate entry and access to the site of proteolysis. Thus, the C-termini of the proteasomal ATPase may function like a 'key in a lock' to induce gate opening and therefore regulate proteolysis. This chain is Proteasome-associated ATPase, found in Mycolicibacterium smegmatis (strain ATCC 700084 / mc(2)155) (Mycobacterium smegmatis).